The primary structure comprises 321 residues: Cytochrome c biogenesis protein CcsA (321 aa).

The next 8 membrane-spanning stretches (helical) occupy residues 17-37, 48-68, 71-91, 98-118, 143-163, 225-245, 259-273, and 286-306; these read VVSI…FVGL, TFFC…HLPI, LYES…VPYF, LSTI…WGLL, MVSG…LLVI, ILSI…VWAN, TWAF…IYFH, and AIVA…VNLL.

Belongs to the CcmF/CycK/Ccl1/NrfE/CcsA family. In terms of assembly, may interact with Ccs1.

It is found in the plastid. It localises to the chloroplast thylakoid membrane. Functionally, required during biogenesis of c-type cytochromes (cytochrome c6 and cytochrome f) at the step of heme attachment. The chain is Cytochrome c biogenesis protein CcsA from Populus alba (White poplar).